We begin with the raw amino-acid sequence, 351 residues long: Inactive RHOMBOID-like protein 8 (351 aa).

A run of 7 helical transmembrane segments spans residues 48-68, 130-150, 160-180, 183-203, 216-236, 239-259, and 294-314; these read TWLVSVFVLLQIVLFAVTMGV, WLHSGLFHLFINLGSLIFVGI, RIAVIYFLSGIMGSLFAVLFV, IPSISSGAAFFGLIGAMLSAL, ALAIIFTIFTVNFLIGFLPFI, FANIGGFISGFLLGFVLLFKP, and IICLLVFCGILAGVLLAACWG.

Belongs to the peptidase S54 family. In terms of tissue distribution, expressed in pollen mother cell.

The protein resides in the golgi apparatus membrane. Functionally, probable inactive rhomboid-type serine protease. In terms of biological role, probably essential for the meiosis stage-specific callose accumulation and pollen exine formation. The protein is Inactive RHOMBOID-like protein 8 of Arabidopsis thaliana (Mouse-ear cress).